Reading from the N-terminus, the 188-residue chain is Ribosomal RNA small subunit methyltransferase G (188 aa).

Residues glycine 69, phenylalanine 74, valine 119–glutamine 120, and arginine 134 each bind S-adenosyl-L-methionine.

This sequence belongs to the methyltransferase superfamily. RNA methyltransferase RsmG family.

The protein resides in the cytoplasm. It carries out the reaction guanosine(527) in 16S rRNA + S-adenosyl-L-methionine = N(7)-methylguanosine(527) in 16S rRNA + S-adenosyl-L-homocysteine. In terms of biological role, specifically methylates the N7 position of guanine in position 527 of 16S rRNA. The sequence is that of Ribosomal RNA small subunit methyltransferase G from Campylobacter jejuni subsp. doylei (strain ATCC BAA-1458 / RM4099 / 269.97).